The sequence spans 678 residues: Protein hook (678 aa).

Positions 1-155 (MSTQNGMYYS…NIMRALQELE (155 aa)) are interaction with microtubules. The region spanning 5 to 123 (NGMYYSLLEW…RLLQLVLGCA (119 aa)) is the Calponin-homology (CH) domain. Coiled-coil stretches lie at residues 135-435 (EIMC…LKCG) and 479-589 (QTAL…AKEV).

Belongs to the hook family. In terms of assembly, homodimer. Interacts with microtubules via its N-terminus.

Its subcellular location is the cytoplasm. It is found in the cytoskeleton. The protein resides in the endosome. The protein localises to the synapse. Involved in endocytic trafficking by stabilizing organelles of the endocytic pathway. Probably acts as a cytoskeletal linker protein required to tether endosome vesicles to the cytoskeleton. Involved in modulation of endocytosis at stages required for down-regulation of membrane proteins that control synapse size. Not involved in synaptic vesicle recycling. Required in R7 cells for boss endocytosis into multivesicular bodies (MVBs). Has a role in regulating adult longevity. In Drosophila virilis (Fruit fly), this protein is Protein hook.